A 129-amino-acid polypeptide reads, in one-letter code: Lysozyme C (129 aa).

Positions 1-129 (KVFSKCELAH…LSEYLASCNL (129 aa)) constitute a C-type lysozyme domain. 4 cysteine pairs are disulfide-bonded: cysteine 6/cysteine 127, cysteine 30/cysteine 115, cysteine 65/cysteine 80, and cysteine 76/cysteine 94. Residues glutamate 35 and aspartate 53 contribute to the active site. Ca(2+)-binding residues include lysine 82, aspartate 85, asparagine 87, aspartate 90, and aspartate 91.

The protein belongs to the glycosyl hydrolase 22 family. Monomer. Ca(2+) serves as cofactor.

It catalyses the reaction Hydrolysis of (1-&gt;4)-beta-linkages between N-acetylmuramic acid and N-acetyl-D-glucosamine residues in a peptidoglycan and between N-acetyl-D-glucosamine residues in chitodextrins.. Functionally, lysozymes have primarily a bacteriolytic function; those in tissues and body fluids are associated with the monocyte-macrophage system and enhance the activity of immunoagents. The chain is Lysozyme C (LYZ) from Equus asinus (Donkey).